We begin with the raw amino-acid sequence, 1189 residues long: Phosphinothricin tripeptide synthetase PhsB (1189 aa).

Positions 5–80 (QTDDVVTGRI…ALAKRIRASR (76 aa)) constitute a Carrier 1 domain. Residue serine 40 is modified to O-(pantetheine 4'-phosphoryl)serine. Disordered stretches follow at residues 75 to 97 (RIRASRSTAPTASGPPRTAPVDS) and 454 to 476 (TPDRDGREPGEGPFAREESGGDT). Positions 100-541 (TAPLTFQQEP…VALLPLQEPA (442 aa)) are condensation. Residues 455-472 (PDRDGREPGEGPFAREES) are compositionally biased toward basic and acidic residues. Residues 572–969 (AQAHRTPDAV…GREDGQVKLR (398 aa)) are adenylation. Residues 1045-1081 (DRVPLTPSGKTDRKALPDPAAGEQPRSGRGAAPGTPA) form a disordered region. In terms of domain architecture, Carrier 2 spans 1076 to 1151 (APGTPAEREL…DFALAVVTAQ (76 aa)). The residue at position 1111 (serine 1111) is an O-(pantetheine 4'-phosphoryl)serine.

The protein belongs to the NRP synthetase family. Pantetheine 4'-phosphate is required as a cofactor.

The catalysed reaction is holo-[peptidyl-carrier protein] + L-alanine + ATP = L-alanyl-[peptidyl-carrier protein] + AMP + diphosphate. Its pathway is secondary metabolite biosynthesis; bialaphos biosynthesis. Involved in the biosynthesis of phosphinothricin tripeptide (PTT), also known as bialaphos (BA), a natural-product antibiotic and potent herbicide. Adenylates L-alanine and loads it onto a peptidyl carrier domain via a thioester linkage to the phosphopanthetheine moiety. Shows weaker activity with aminobutyric acid and L-serine. The protein is Phosphinothricin tripeptide synthetase PhsB of Streptomyces viridochromogenes (strain DSM 40736 / JCM 4977 / BCRC 1201 / Tue 494).